The chain runs to 399 residues: tRNA-dihydrouridine(16/17) synthase [NAD(P)(+)] (399 aa).

FMN-binding positions include 24 to 26 (PMV) and Gln80. Cys109 serves as the catalytic Proton donor. FMN contacts are provided by residues Lys148, His176, 211–213 (NGN), and 235–236 (AE).

Belongs to the Dus family. Dus1 subfamily. It depends on FMN as a cofactor.

The protein resides in the nucleus. The protein localises to the mitochondrion. The catalysed reaction is 5,6-dihydrouridine(16) in tRNA + NADP(+) = uridine(16) in tRNA + NADPH + H(+). It carries out the reaction 5,6-dihydrouridine(16) in tRNA + NAD(+) = uridine(16) in tRNA + NADH + H(+). It catalyses the reaction 5,6-dihydrouridine(17) in tRNA + NAD(+) = uridine(17) in tRNA + NADH + H(+). The enzyme catalyses 5,6-dihydrouridine(17) in tRNA + NADP(+) = uridine(17) in tRNA + NADPH + H(+). The catalysed reaction is a 5,6-dihydrouridine in mRNA + NAD(+) = a uridine in mRNA + NADH + H(+). It carries out the reaction a 5,6-dihydrouridine in mRNA + NADP(+) = a uridine in mRNA + NADPH + H(+). Its function is as follows. Catalyzes the synthesis of dihydrouridine, a modified base found in the D-loop of most tRNAs. Also able to mediate dihydrouridylation of some mRNAs, thereby affecting their translation. The chain is tRNA-dihydrouridine(16/17) synthase [NAD(P)(+)] from Schizosaccharomyces pombe (strain 972 / ATCC 24843) (Fission yeast).